Consider the following 222-residue polypeptide: DnaJ homolog subfamily B member 9 (222 aa).

The signal sequence occupies residues 1–23 (MATPQSVFVFAICILMITELILA). One can recognise a J domain in the interval 26–90 (NYYDILGVPK…NRRKEYDIIG (65 aa)). Residues 91 to 222 (HSAFTNGKGQ…VTTYTDCSGQ (132 aa)) form a divergent targeting domain region. The residue at position 133 (serine 133) is a Phosphoserine.

As to quaternary structure, interacts with HSPA5/BiP; interaction is direct. Interacts with ERN1/IRE1 (via the luminal region). Interacts with DERL1.

The protein resides in the endoplasmic reticulum lumen. Its function is as follows. Co-chaperone for Hsp70 protein HSPA5/BiP that acts as a key repressor of the ERN1/IRE1-mediated unfolded protein response (UPR). J domain-containing co-chaperones stimulate the ATPase activity of Hsp70 proteins and are required for efficient substrate recognition by Hsp70 proteins. In the unstressed endoplasmic reticulum, interacts with the luminal region of ERN1/IRE1 and selectively recruits HSPA5/BiP: HSPA5/BiP disrupts the dimerization of the active ERN1/IRE1 luminal region, thereby inactivating ERN1/IRE1. Also involved in endoplasmic reticulum-associated degradation (ERAD) of misfolded proteins. Required for survival of B-cell progenitors and normal antibody production. In Rattus norvegicus (Rat), this protein is DnaJ homolog subfamily B member 9.